Here is a 478-residue protein sequence, read N- to C-terminus: PRAME family member 27 (478 aa).

The LRR 1 repeat unit spans residues 17–40; sequence RSLLRDQALAMSTLEELPTELFPP. Residues 99–126 form an LRR 1; degenerate repeat; that stretch reads RWKLQVLDLQDVCENFWMVWSEAMARGS. The stretch at 181 to 205 is one LRR 2; degenerate repeat; the sequence is HLCCKKLKILGMPFRNIRSILKMVN. An LRR 3; degenerate repeat occupies 206–232; that stretch reads LDCIQEVEVNCKWVLPILTQFTPYLGH. The LRR 4; degenerate repeat unit spans residues 233 to 268; that stretch reads MRNLQKLVLSHMDVSRYVSPEQKKEIVTQFTTQFLK. 5 LRR repeats span residues 269–294, 295–326, 327–348, 351–378, and 379–403; these read LHCL…LSCL, KTSL…SQLK, TLDL…ILLE, AATL…ALSR, and CFEL…LLSH.

It belongs to the PRAME family.

This chain is PRAME family member 27, found in Homo sapiens (Human).